A 337-amino-acid chain; its full sequence is Eukaryotic translation initiation factor 3 subunit I (337 aa).

WD repeat units follow at residues glycine 8–threonine 47, glycine 50–aspartate 91, cysteine 147–asparagine 186, glutamate 191–threonine 230, and glycine 288–methionine 327.

Belongs to the eIF-3 subunit I family. Component of the eukaryotic translation initiation factor 3 (eIF-3) complex.

Its subcellular location is the cytoplasm. Functionally, component of the eukaryotic translation initiation factor 3 (eIF-3) complex, which is involved in protein synthesis of a specialized repertoire of mRNAs and, together with other initiation factors, stimulates binding of mRNA and methionyl-tRNAi to the 40S ribosome. The eIF-3 complex specifically targets and initiates translation of a subset of mRNAs involved in cell proliferation. This chain is Eukaryotic translation initiation factor 3 subunit I (tif34), found in Aspergillus niger (strain ATCC MYA-4892 / CBS 513.88 / FGSC A1513).